The sequence spans 447 residues: Phosphoglucosamine mutase (447 aa).

Ser100 serves as the catalytic Phosphoserine intermediate. Residues Ser100, Asp240, Asp242, and Asp244 each coordinate Mg(2+). Position 100 is a phosphoserine (Ser100).

It belongs to the phosphohexose mutase family. Mg(2+) serves as cofactor. In terms of processing, activated by phosphorylation.

It carries out the reaction alpha-D-glucosamine 1-phosphate = D-glucosamine 6-phosphate. In terms of biological role, catalyzes the conversion of glucosamine-6-phosphate to glucosamine-1-phosphate. The polypeptide is Phosphoglucosamine mutase (Clostridium botulinum (strain Eklund 17B / Type B)).